The sequence spans 367 residues: Tape measure protein (367 aa).

The protein belongs to the skunalikevirus tape measure protein family.

The protein localises to the virion. Its function is as follows. Tape measure protein. Serves as a base for tail tube protein polymerization and acts as a template for tail length determination. This Lactococcus lactis (Lactococcus lactis bacteriophage F4-1) protein is Tape measure protein.